The primary structure comprises 824 residues: Glycogen phosphorylase (824 aa).

At K667 the chain carries N6-(pyridoxal phosphate)lysine.

Belongs to the glycogen phosphorylase family. The cofactor is pyridoxal 5'-phosphate.

The catalysed reaction is [(1-&gt;4)-alpha-D-glucosyl](n) + phosphate = [(1-&gt;4)-alpha-D-glucosyl](n-1) + alpha-D-glucose 1-phosphate. Its function is as follows. Phosphorylase is an important allosteric enzyme in carbohydrate metabolism. Enzymes from different sources differ in their regulatory mechanisms and in their natural substrates. However, all known phosphorylases share catalytic and structural properties. The polypeptide is Glycogen phosphorylase (glgP) (Chlamydia pneumoniae (Chlamydophila pneumoniae)).